Here is a 347-residue protein sequence, read N- to C-terminus: MMKVCVIEGDGIGKEVIPEAIKILNELGEFEIIKGEAGLECLKKYGNALPEDTIEKAKEADIILFGAITSPKPGEVKNYKSPIITLRKMFHLYANVRPINNFGIGQLIGKIADYEFLNAKNIDIVIIRENTEDLYVGRERLENDTAIAERVITRKGSERIIRFAFEYAIKNNRKKVSCIHKANVLRITDGLFLEVFNEIKKHYNIEADDYLVDSTAMNLIKHPEKFDVIVTTNMFGDILSDEASALIGGLGLAPSANIGDDKALFEPVHGSAPDIAGKGIANPMASILSIAMLFDYIGEKEKGDLIREAVKYCLINKKVTPDLGGDLKTKDVGDEILNYIRKKLKGY.

68-70 (ITS) contacts NADH. Serine 70 is a binding site for (2R,3S)-homoisocitrate. Position 81 is a phosphoserine (serine 81). Positions 87, 97, 128, 135, 181, and 183 each coordinate (2R,3S)-homoisocitrate. Asparagine 183 is an NADH binding site. Mg(2+) contacts are provided by aspartate 213, aspartate 237, and aspartate 241. NADH-binding positions include 270–274 (GSAPD) and asparagine 282.

Belongs to the isocitrate and isopropylmalate dehydrogenases family. The cofactor is Mg(2+).

It carries out the reaction (2R,3S)-homoisocitrate + NAD(+) = 2-oxoadipate + CO2 + NADH. It catalyses the reaction (2R,3S)-iso(homo)2citrate + NAD(+) = 2-oxoheptanedioate + CO2 + NADH. The catalysed reaction is (2R,3S)-iso(homo)3citrate + NAD(+) = 2-oxosuberate + CO2 + NADH. Its pathway is organic acid metabolism; 2-oxosuberate biosynthesis. Functionally, catalyzes the NAD-dependent oxidation and decarboxylation of (2R,3S)-homoisocitrate, (2R,3S)-homo(2)-isocitrate and (2R,3S)-homo(3)-isocitrate, into 2-oxoadipate, 2-oxopimelate (2-oxoheptanedioate), and 2-oxosuberate, respectively. All these substrates are intermediates in the biosynthesis of biotin and of 7-mercaptoheptanoate, a moiety of coenzyme B in methanoarchaea. Is also able to produce 2-oxoazelate from (2R,3S)-homo(4)-isocitrate in vitro, but this substrate is probably not physiologically relevant. Is unable to use any isomer of isocitrate or isopropylmalate as a substrate, and NADP as an oxidant. This chain is Homoisocitrate dehydrogenase (aksF), found in Methanocaldococcus jannaschii (strain ATCC 43067 / DSM 2661 / JAL-1 / JCM 10045 / NBRC 100440) (Methanococcus jannaschii).